Consider the following 693-residue polypeptide: Polyribonucleotide nucleotidyltransferase (693 aa).

Mg(2+)-binding residues include D489 and D495. Residues 556–615 (PQIHVMNINPAKIKDVVGRGGATVKGIVEKTGAQIDTSDSGEVKVFAKDKKSMDMAVAMI) enclose the KH domain. The 69-residue stretch at 625-693 (GQVYKGKIVK…GRVKLSLVAR (69 aa)) folds into the S1 motif domain.

It belongs to the polyribonucleotide nucleotidyltransferase family. In terms of assembly, component of the RNA degradosome, which is a multiprotein complex involved in RNA processing and mRNA degradation. It depends on Mg(2+) as a cofactor.

It localises to the cytoplasm. The enzyme catalyses RNA(n+1) + phosphate = RNA(n) + a ribonucleoside 5'-diphosphate. Involved in mRNA degradation. Catalyzes the phosphorolysis of single-stranded polyribonucleotides processively in the 3'- to 5'-direction. The protein is Polyribonucleotide nucleotidyltransferase of Francisella tularensis subsp. novicida (strain U112).